Reading from the N-terminus, the 319-residue chain is MTNSSFFCPVYKDLEPFTYFFYLVFLVGIIGSCFATWAFIQKNTNHRCVSIYLINLLTADFLLTLALPVKIVVDLGVAPWKLKIFHCQVTACLIYINMYLSIIFLAFVSIDRCLQLTHSCKIYRIQEPGFAKMISTVVWLMVLLIMVPNMMIPIKDIKEKSNVGCMEFKKEFGRNWHLLTNFICVAIFLNFSAIILISNCLVIRQLYRNKDNENYPNVKKALINILLVTTGYIICFVPYHIVRIPYTLSQTEVITDCSTRISLFKAKEATLLLAVSNLCFDPILYYHLSKAFRSKVTETFASPKETKAQKEKLRCENNA.

At 1–21 the chain is on the extracellular side; the sequence is MTNSSFFCPVYKDLEPFTYFF. N-linked (GlcNAc...) asparagine glycosylation occurs at asparagine 3. A helical membrane pass occupies residues 22-42; the sequence is YLVFLVGIIGSCFATWAFIQK. Residues 43-48 lie on the Cytoplasmic side of the membrane; sequence NTNHRC. Residues 49-69 traverse the membrane as a helical segment; that stretch reads VSIYLINLLTADFLLTLALPV. Over 70–89 the chain is Extracellular; that stretch reads KIVVDLGVAPWKLKIFHCQV. The chain crosses the membrane as a helical span at residues 90-110; it reads TACLIYINMYLSIIFLAFVSI. The Cytoplasmic segment spans residues 111–132; sequence DRCLQLTHSCKIYRIQEPGFAK. The chain crosses the membrane as a helical span at residues 133-153; the sequence is MISTVVWLMVLLIMVPNMMIP. Residues 154 to 181 are Extracellular-facing; it reads IKDIKEKSNVGCMEFKKEFGRNWHLLTN. Residues 182 to 202 form a helical membrane-spanning segment; it reads FICVAIFLNFSAIILISNCLV. Residues 203 to 224 are Cytoplasmic-facing; it reads IRQLYRNKDNENYPNVKKALIN. Residues 225-245 form a helical membrane-spanning segment; the sequence is ILLVTTGYIICFVPYHIVRIP. Residues 246–268 lie on the Extracellular side of the membrane; it reads YTLSQTEVITDCSTRISLFKAKE. The helical transmembrane segment at 269-289 threads the bilayer; the sequence is ATLLLAVSNLCFDPILYYHLS. At 290 to 319 the chain is on the cytoplasmic side; the sequence is KAFRSKVTETFASPKETKAQKEKLRCENNA.

This sequence belongs to the G-protein coupled receptor 1 family. As to expression, expressed in both T-cell subsets and natural killer cells, while it is undetectable in B cells or CD14(+) monocytes. Expressed in peripheral blood mononuclear cells (PBMC) and Jurkat cells (at protein level).

It is found in the cell membrane. Its function is as follows. G-protein coupled receptor for Big LEN, a 16-amino acid neuropeptide produced from the precursor protein, proSAAS (encoded by PCSK1N). Acts through a G(i)-alpha-mediated pathway in response to Big LEN. Big LEN-GPR171 system plays an important role in regulating feeding and metabolism. Also plays a role in modulating fear and anxiety-like behaviors in the basolateral amygdala. Big LEN-GPR171 modulates the mu-type opioid receptor signaling and antinociception. Acts as a negative regulator T cell function. This Homo sapiens (Human) protein is G-protein coupled receptor 171.